The primary structure comprises 171 residues: Siroheme decarboxylase NirH subunit (171 aa).

The protein belongs to the Ahb/Nir family. As to quaternary structure, probably forms a complex composed of NirD, NirL, NirG and NirH. All proteins are required for the total conversion of siroheme to didecarboxysiroheme.

It carries out the reaction siroheme + 2 H(+) = 12,18-didecarboxysiroheme + 2 CO2. Its pathway is porphyrin-containing compound metabolism. In terms of biological role, involved in heme d1 biosynthesis. Catalyzes the decarboxylation of siroheme into didecarboxysiroheme. The sequence is that of Siroheme decarboxylase NirH subunit from Pseudomonas aeruginosa (strain ATCC 15692 / DSM 22644 / CIP 104116 / JCM 14847 / LMG 12228 / 1C / PRS 101 / PAO1).